The chain runs to 763 residues: DEK domain-containing chromatin-associated protein 3 (763 aa).

Disordered regions lie at residues 1–324 and 458–681; these read MGED…RERK and TGDV…SDKV. The span at 11-20 shows a compositional bias: polar residues; that stretch reads PTANKTTSLE. Basic and acidic residues-rich tracts occupy residues 32 to 44, 72 to 97, 124 to 172, and 180 to 242; these read AGGK…AKDE, SEVK…KDEG, TVMK…KANG, and DIKE…KVED. Positions 60-96 form a coiled coil; sequence KDDEKAETEDKESEVKKNEDNAETQKMEEKVEVTKDE. Residues 214–286 are a coiled coil; the sequence is GKEKEDKEEN…KEESKGSKKR (73 aa). Acidic residues predominate over residues 243 to 252; sequence EKEGSEDEND. The span at 253–264 shows a compositional bias: basic and acidic residues; the sequence is NEKVESKDAKED. The span at 265–277 shows a compositional bias: acidic residues; the sequence is EKEETNDDKEDEK. The short motif at 284–291 is the Nuclear localization signal 1 element; sequence KKRGKGTS. The span at 295–311 shows a compositional bias: basic and acidic residues; the sequence is KVREKNKTEEVKKDAEP. The segment covering 475 to 484 has biased composition (basic residues); sequence KGAKRKRTPK. Residues 483–490 carry the Nuclear localization signal 2 motif; it reads PKKTSPTA. A compositionally biased stretch (low complexity) spans 485 to 496; it reads KTSPTAGSSSSK. Residues 513–551 are a coiled coil; that stretch reads KKSLAHSDDESEEEKEEEEKQEEEKAEEKEEKKEEENEN. Acidic residues predominate over residues 521 to 533; sequence DESEEEKEEEEKQ. Residues 534 to 547 are compositionally biased toward basic and acidic residues; that stretch reads EEEKAEEKEEKKEE. Residues 557 to 578 are compositionally biased toward acidic residues; sequence SEDEAPQPSESEEKDESEEHSE. Composition is skewed to low complexity over residues 606–615 and 650–660; these read AVVAAKSSPP and PIKASPAPSKS. A compositionally biased stretch (basic and acidic residues) spans 661–681; the sequence is ASKEKPVKRAGKGKDKPSDKV. The 56-residue stretch at 676-731 folds into the DEK-C domain; it reads KPSDKVLKNAIVEILKRVDFSTATFTDILKELAKEFTEDLTPRKSSIKMIIQEELT. DNA-binding regions lie at residues 694-708 and 723-727; these read DFST…KELA and KMIIQ. Positions 723–753 form a coiled coil; that stretch reads KMIIQEELTKLADEEEEEEKKEEDSEKEEAG. The interval 730–763 is disordered; it reads LTKLADEEEEEEKKEEDSEKEEAGGSGGGEEVKA. Residues 753–763 show a composition bias toward gly residues; sequence GGSGGGEEVKA.

As to quaternary structure, found in a mRNA splicing-dependent exon junction complex (EJC). Binds specifically histones H3 and H4. Interacts with TOP1A, SCC3, At1g61730, At1g20940, At1g13930, DEK4, HDT1, NIT1, SHL, CYP19-1, GEBPL, HSP70-3, PDP2, PDP3, KIN2, RPL11A and PDS5A. As to expression, highly expressed in young seedlings.

The protein resides in the nucleus. Its subcellular location is the nucleolus. Its function is as follows. Chromatin-associated protein which contributes to the modulation of chromatin structure (such as super-helical structure of DNA) and function. Binds to chromatin of protein-coding genes throughout the genome to regulate nucleosome occupancy and chromatin accessibility, and to modulate the expression of target genes. Negative regulator of stress tolerance (e.g. high salt). The polypeptide is DEK domain-containing chromatin-associated protein 3 (Arabidopsis thaliana (Mouse-ear cress)).